Here is a 187-residue protein sequence, read N- to C-terminus: Ribosome-recycling factor (187 aa).

Belongs to the RRF family.

The protein resides in the cytoplasm. Responsible for the release of ribosomes from messenger RNA at the termination of protein biosynthesis. May increase the efficiency of translation by recycling ribosomes from one round of translation to another. This chain is Ribosome-recycling factor, found in Orientia tsutsugamushi (strain Boryong) (Rickettsia tsutsugamushi).